Consider the following 213-residue polypeptide: Pyridoxine/pyridoxamine 5'-phosphate oxidase (213 aa).

Substrate-binding positions include 9 to 12 and Lys-67; that span reads RKSY. Residues 62–67, 77–78, Arg-83, and Lys-84 each bind FMN; these read RVVLIK and YT. Substrate contacts are provided by Tyr-124, Arg-128, and Ser-132. FMN-binding positions include 141–142 and Trp-185; that span reads QS. A substrate-binding site is contributed by 191 to 193; that stretch reads RLH. Arg-195 serves as a coordination point for FMN.

It belongs to the pyridoxamine 5'-phosphate oxidase family. In terms of assembly, homodimer. FMN is required as a cofactor.

The enzyme catalyses pyridoxamine 5'-phosphate + O2 + H2O = pyridoxal 5'-phosphate + H2O2 + NH4(+). It catalyses the reaction pyridoxine 5'-phosphate + O2 = pyridoxal 5'-phosphate + H2O2. It functions in the pathway cofactor metabolism; pyridoxal 5'-phosphate salvage; pyridoxal 5'-phosphate from pyridoxamine 5'-phosphate: step 1/1. The protein operates within cofactor metabolism; pyridoxal 5'-phosphate salvage; pyridoxal 5'-phosphate from pyridoxine 5'-phosphate: step 1/1. In terms of biological role, catalyzes the oxidation of either pyridoxine 5'-phosphate (PNP) or pyridoxamine 5'-phosphate (PMP) into pyridoxal 5'-phosphate (PLP). This chain is Pyridoxine/pyridoxamine 5'-phosphate oxidase, found in Methylibium petroleiphilum (strain ATCC BAA-1232 / LMG 22953 / PM1).